The following is a 486-amino-acid chain: Maintenance of mitochondrial morphology protein 1 (486 aa).

The Lumenal segment spans residues 1–20 (MNFQQSAIPPFSFLLSFTQG). A helical membrane pass occupies residues 21-41 (FLLGQLSVVLLIGAFIKFFIF). Residues 42–486 (GEAPPPPSRG…GSLPDGAVGN (445 aa)) are Cytoplasmic-facing. Disordered stretches follow at residues 70 to 96 (TNEA…SSST), 271 to 320 (TPPL…SPKS), and 387 to 486 (RTGV…AVGN). Polar residues predominate over residues 83–96 (STSNVLRPVPSSST). In terms of domain architecture, SMP-LTD spans 128–379 (QPESLDWFNV…EPRVQVVGLP (252 aa)). Positions 271–282 (TPPLHTPSPSPA) are enriched in pro residues. Residues 292-306 (QSQPENNSSNPNQQS) are compositionally biased toward low complexity. Composition is skewed to polar residues over residues 398–407 (TGSNAASRSA) and 440–450 (DSVSRSSSFNV). Positions 460 to 474 (MTREDSRGAISDDFH) are enriched in basic and acidic residues.

This sequence belongs to the MMM1 family. In terms of assembly, homodimer. Component of the ER-mitochondria encounter structure (ERMES) or MDM complex, composed of mmm1, mdm10, mdm12 and mdm34. A mmm1 homodimer associates with one molecule of mdm12 on each side in a pairwise head-to-tail manner, and the SMP-LTD domains of mmm1 and mdm12 generate a continuous hydrophobic tunnel for phospholipid trafficking.

It localises to the endoplasmic reticulum membrane. Functionally, component of the ERMES/MDM complex, which serves as a molecular tether to connect the endoplasmic reticulum (ER) and mitochondria. Components of this complex are involved in the control of mitochondrial shape and protein biogenesis, and function in nonvesicular lipid trafficking between the ER and mitochondria. The mdm12-mmm1 subcomplex functions in the major beta-barrel assembly pathway that is responsible for biogenesis of all outer membrane beta-barrel proteins, and acts in a late step after the SAM complex. The mdm10-mdm12-mmm1 subcomplex further acts in the TOM40-specific pathway after the action of the mdm12-mmm1 complex. Essential for establishing and maintaining the structure of mitochondria and maintenance of mtDNA nucleoids. The sequence is that of Maintenance of mitochondrial morphology protein 1 from Aspergillus terreus (strain NIH 2624 / FGSC A1156).